Here is a 132-residue protein sequence, read N- to C-terminus: Translation initiation factor 2 subunit beta (132 aa).

The segment at 1–30 (MDYEEQLDRAMDEKPDVTGSETRFEVPDPN) is disordered.

Belongs to the eIF-2-beta/eIF-5 family. As to quaternary structure, heterotrimer composed of an alpha, a beta and a gamma chain.

Functionally, eIF-2 functions in the early steps of protein synthesis by forming a ternary complex with GTP and initiator tRNA. The sequence is that of Translation initiation factor 2 subunit beta from Halobacterium salinarum (strain ATCC 29341 / DSM 671 / R1).